The following is a 410-amino-acid chain: Replication-associated protein G2P (410 aa).

The protein belongs to the inovirus G2P protein family.

It carries out the reaction ATP + (deoxyribonucleotide)n-3'-hydroxyl + 5'-phospho-(deoxyribonucleotide)m = (deoxyribonucleotide)n+m + AMP + diphosphate.. Isoform G2P plays an essential role in viral DNA replication. Binds the origin of replication and cleaves the dsDNA replicative form I (RFI) and becomes covalently bound to it via phosphotyrosine bond, generating the dsDNA replicative form II (RFII). In turn, viral DNA replication initiates at the 3'-OH of the cleavage site. After one round of rolling circle synthesis, protein G2P is linked to the newly synthesized ssDNA and joins the ends of the displaced strand to generate a circular single-stranded molecule ready to be packed into a virion. In terms of biological role, isoform G10P protein binds to double-stranded DNA and prevents hydrolysis by nucleases. Additionally, G10P is an inhibitor of DNA replication and may have a role in the transition from semiconservative replicative form DNA replication to single-stranded DNA synthesis in the life cycle. The polypeptide is Replication-associated protein G2P (II) (Enterobacteria phage M13 (Bacteriophage M13)).